The sequence spans 317 residues: Zinc transporter ZIP3 (317 aa).

Residues 1 to 3 (MTK) lie on the Extracellular side of the membrane. The chain crosses the membrane as a helical span at residues 4–24 (LLVAKVLCMVGVFFFMLLGSL). At 25–42 (LPVKVIEADLEKAHRSKK) the chain is on the cytoplasmic side. A helical membrane pass occupies residues 43–63 (VLSLCNTFGGGVFLATCFNAL). The Extracellular portion of the chain corresponds to 64–85 (LPAVRDKLQQVLSLGHISTDYP). A helical transmembrane segment spans residues 86 to 106 (LAETLMMVGFFLTVFVEQLVL). Residues 107–172 (TFRRERPPFI…RELGRPGPLR (66 aa)) are Cytoplasmic-facing. A phosphoserine mark is found at Ser-125 and Ser-129. Residues 173–193 (LLSLVFALSAHSVFEGLALGL) form a helical membrane-spanning segment. The Extracellular segment spans residues 194 to 199 (QEEGER). A helical transmembrane segment spans residues 200–220 (VVSLFVGVAIHETLVAVALGI). At 221-232 (SMARSAVPLRDA) the chain is on the cytoplasmic side. Residues 233-253 (AKLAVTVSAMIPVGIGLGLGI) form a helical membrane-spanning segment. The Extracellular portion of the chain corresponds to 254-265 (ESARSVASSVAS). A helical transmembrane segment spans residues 266–286 (ALLQGLAGGTFLFVTFLEILA). Topologically, residues 287–294 (KELEERSE) are cytoplasmic. A helical transmembrane segment spans residues 295–315 (QLLKVLFLVLGYAVLAGMVFL). Topologically, residues 316–317 (KW) are extracellular.

It belongs to the ZIP transporter (TC 2.A.5) family. In terms of tissue distribution, highly expressed in the testes. Highly expressed in dentate gyrus granule cells of the hippocampus. Expressed in the mammary gland.

The protein localises to the cell membrane. The protein resides in the apical cell membrane. It catalyses the reaction Zn(2+)(in) = Zn(2+)(out). In terms of biological role, transporter for the divalent cation Zn(2+). Mediates the influx of Zn(2+) into cells from extracellular space. Controls Zn(2+) accumulation into dentate gyrus granule cells in the hippocampus. Mediates Zn(2+) reuptake from the secreted milk within the alveolar lumen. This is Zinc transporter ZIP3 (Slc39a3) from Mus musculus (Mouse).